The sequence spans 221 residues: Vesicle-associated membrane protein 722 (221 aa).

Over 1–196 (MAQQSLIYSF…MWFQNMKIKL (196 aa)) the chain is Cytoplasmic. The region spanning 10–114 (FVARGTVILV…SLNKEFGSKL (105 aa)) is the Longin domain. The v-SNARE coiled-coil homology domain occupies 130 to 190 (KLAKVKAQVS…TQMRRKMWFQ (61 aa)). Residues 197–217 (IVLAIIIALILIIILSICGGF) traverse the membrane as a helical; Anchor for type IV membrane protein segment. Over 218–221 (NCGK) the chain is Vesicular.

The protein belongs to the synaptobrevin family. As to expression, highly expressed in stems and roots. Detected in flowers and leaves.

Its subcellular location is the cell membrane. The protein localises to the early endosome membrane. Functionally, involved in the targeting and/or fusion of transport vesicles to their target membrane. The protein is Vesicle-associated membrane protein 722 of Arabidopsis thaliana (Mouse-ear cress).